The following is a 189-amino-acid chain: Probable nicotinate-nucleotide adenylyltransferase (189 aa).

It belongs to the NadD family.

The enzyme catalyses nicotinate beta-D-ribonucleotide + ATP + H(+) = deamido-NAD(+) + diphosphate. It participates in cofactor biosynthesis; NAD(+) biosynthesis; deamido-NAD(+) from nicotinate D-ribonucleotide: step 1/1. Catalyzes the reversible adenylation of nicotinate mononucleotide (NaMN) to nicotinic acid adenine dinucleotide (NaAD). This is Probable nicotinate-nucleotide adenylyltransferase from Bacillus cereus (strain AH187).